Here is a 610-residue protein sequence, read N- to C-terminus: Glutamine--fructose-6-phosphate aminotransferase [isomerizing] (610 aa).

C2 functions as the Nucleophile; for GATase activity in the catalytic mechanism. Positions 2 to 221 (CGIVGAVAQR…DGDVVDLQLA (220 aa)) constitute a Glutamine amidotransferase type-2 domain. SIS domains are found at residues 286-426 (AYKV…TRGR) and 459-600 (WADR…VDKP). K605 serves as the catalytic For Fru-6P isomerization activity.

Homodimer.

It localises to the cytoplasm. It carries out the reaction D-fructose 6-phosphate + L-glutamine = D-glucosamine 6-phosphate + L-glutamate. Catalyzes the first step in hexosamine metabolism, converting fructose-6P into glucosamine-6P using glutamine as a nitrogen source. The chain is Glutamine--fructose-6-phosphate aminotransferase [isomerizing] from Bordetella bronchiseptica (strain ATCC BAA-588 / NCTC 13252 / RB50) (Alcaligenes bronchisepticus).